Here is a 496-residue protein sequence, read N- to C-terminus: Glutamyl-tRNA(Gln) amidotransferase subunit A (496 aa).

Residues lysine 75 and serine 150 each act as charge relay system in the active site. The active-site Acyl-ester intermediate is the serine 174.

This sequence belongs to the amidase family. GatA subfamily. As to quaternary structure, heterotrimer of A, B and C subunits.

It catalyses the reaction L-glutamyl-tRNA(Gln) + L-glutamine + ATP + H2O = L-glutaminyl-tRNA(Gln) + L-glutamate + ADP + phosphate + H(+). Allows the formation of correctly charged Gln-tRNA(Gln) through the transamidation of misacylated Glu-tRNA(Gln) in organisms which lack glutaminyl-tRNA synthetase. The reaction takes place in the presence of glutamine and ATP through an activated gamma-phospho-Glu-tRNA(Gln). This is Glutamyl-tRNA(Gln) amidotransferase subunit A from Burkholderia mallei (strain NCTC 10247).